The chain runs to 424 residues: Trigger factor (424 aa).

The PPIase FKBP-type domain occupies 163-248; sequence GDTVVLDFEG…IHEIKAKELP (86 aa).

The protein belongs to the FKBP-type PPIase family. Tig subfamily.

It is found in the cytoplasm. It catalyses the reaction [protein]-peptidylproline (omega=180) = [protein]-peptidylproline (omega=0). Its function is as follows. Involved in protein export. Acts as a chaperone by maintaining the newly synthesized protein in an open conformation. Functions as a peptidyl-prolyl cis-trans isomerase. In Bacillus licheniformis (strain ATCC 14580 / DSM 13 / JCM 2505 / CCUG 7422 / NBRC 12200 / NCIMB 9375 / NCTC 10341 / NRRL NRS-1264 / Gibson 46), this protein is Trigger factor.